The following is a 64-amino-acid chain: SPbeta prophage-derived uncharacterized protein YosJ (64 aa).

This Bacillus subtilis (strain 168) protein is SPbeta prophage-derived uncharacterized protein YosJ (yosJ).